The following is a 251-amino-acid chain: 16S rRNA (guanine(1405)-N(7))-methyltransferase (251 aa).

S-adenosyl-L-methionine is bound by residues Tyr56, 81-83, Arg87, Ala111, Asp131, 157-158, Phe173, and Glu182; these read HAS and DV.

This sequence belongs to the methyltransferase superfamily. Aminoglycoside resistance family.

The enzyme catalyses guanosine(1405) in 16S rRNA + S-adenosyl-L-methionine = N(7)-methylguanosine(1405) in 16S rRNA + S-adenosyl-L-homocysteine. Specifically methylates the N(7) position of guanine 1405 in 16S rRNA. Confers resistance to various aminoglycosides, including kanamycin, tobramycin, amikacin, arbekacin, gentamicin, sisomicin and isepamicin. This Serratia marcescens protein is 16S rRNA (guanine(1405)-N(7))-methyltransferase (rmtB).